Consider the following 342-residue polypeptide: Muscleblind-like protein 3 (342 aa).

4 consecutive C3H1-type zinc fingers follow at residues 14–42 (WLTL…HPPR), 48–74 (NGRV…HPPP), 174–202 (TDRL…HPTD), and 210–236 (DNSV…HPPP). The span at 316 to 326 (PSTVSTATPPA) shows a compositional bias: low complexity. Positions 316-342 (PSTVSTATPPASNVPYVPTTTGNQLKY) are disordered. A compositionally biased stretch (polar residues) spans 333–342 (PTTTGNQLKY).

The protein belongs to the muscleblind family.

The protein localises to the nucleus. Its subcellular location is the cytoplasm. Mediates pre-mRNA alternative splicing regulation. Acts either as activator or repressor of splicing on specific pre-mRNA targets. Inhibits cardiac troponin-T (TNNT2) pre-mRNA exon inclusion but induces insulin receptor (IR) pre-mRNA exon inclusion in muscle. Antagonizes the alternative splicing activity pattern of CELF proteins. Could inhibit terminal muscle differentiation, acting at approximately the time of myogenin induction. The chain is Muscleblind-like protein 3 (Mbnl3) from Mus musculus (Mouse).